A 436-amino-acid polypeptide reads, in one-letter code: Homeobox protein PKNOX1 (436 aa).

Positions 24 to 49 (LKTEQDPNCSEPDVEGVSPPPVGSQT) are disordered. 2 positions are modified to phosphoserine: serine 33 and serine 41. Positions 80 to 163 (GSEGTTSASF…MNSETLLSGE (84 aa)) constitute an MEIS N-terminal domain. A DNA-binding region (homeobox; TALE-type) is located at residues 259–321 (SKNKRGVLPK…NARRRILQPM (63 aa)). A disordered region spans residues 401-436 (AEQSEDDSVDSTGDGGAALAPGHLGGLVLENSDSLQ).

This sequence belongs to the TALE/MEIS homeobox family. Interacts with MN1.

Its subcellular location is the nucleus. Activates transcription in the presence of PBX1A and HOXA1. This chain is Homeobox protein PKNOX1, found in Bos taurus (Bovine).